The following is a 312-amino-acid chain: Malate dehydrogenase (312 aa).

NAD(+) contacts are provided by residues 7–13 (GAAGGIG) and D34. R81 and R87 together coordinate substrate. Residues N94 and 117-119 (ITN) contribute to the NAD(+) site. Substrate-binding residues include N119 and R153. Residue H177 is the Proton acceptor of the active site. An NAD(+)-binding site is contributed by M227.

This sequence belongs to the LDH/MDH superfamily. MDH type 1 family. Homodimer.

The enzyme catalyses (S)-malate + NAD(+) = oxaloacetate + NADH + H(+). In terms of biological role, catalyzes the reversible oxidation of malate to oxaloacetate. The polypeptide is Malate dehydrogenase (Salmonella agona (strain SL483)).